A 130-amino-acid chain; its full sequence is Small ribosomal subunit protein uS9 (130 aa).

The segment at 105 to 130 is disordered; it reads TRDPRMKERKKYGLKGARRAPQFSKR. Residues 111–130 are compositionally biased toward basic residues; sequence KERKKYGLKGARRAPQFSKR.

Belongs to the universal ribosomal protein uS9 family.

This chain is Small ribosomal subunit protein uS9, found in Bacillus pumilus (strain SAFR-032).